A 239-amino-acid chain; its full sequence is uncharacterized protein (239 aa).

Residues 1-65 (MRLDKLLANS…DYREFIYLMM (65 aa)) form the S4 RNA-binding domain. Asp-103 acts as the Nucleophile in catalysis.

The protein belongs to the pseudouridine synthase RsuA family.

The enzyme catalyses a uridine in RNA = a pseudouridine in RNA. This is an uncharacterized protein from Bacillus subtilis (strain 168).